The primary structure comprises 455 residues: Phosphoglucosamine mutase (455 aa).

Residue serine 107 is the Phosphoserine intermediate of the active site. The Mg(2+) site is built by serine 107, aspartate 247, aspartate 249, and aspartate 251. Serine 107 carries the phosphoserine modification.

It belongs to the phosphohexose mutase family. The cofactor is Mg(2+). In terms of processing, activated by phosphorylation.

The catalysed reaction is alpha-D-glucosamine 1-phosphate = D-glucosamine 6-phosphate. In terms of biological role, catalyzes the conversion of glucosamine-6-phosphate to glucosamine-1-phosphate. The polypeptide is Phosphoglucosamine mutase (Leuconostoc citreum (strain KM20)).